Here is a 99-residue protein sequence, read N- to C-terminus: Transmembrane protein 14A (99 aa).

Helical transmembrane passes span 1–21 (MDLIGFGYAALVTFGSIFGYK), 24–44 (GGVPSLIAGLFVGCLAGYGAY), and 79–99 (PAGLVAGLSLMMILRLVLLLL).

This sequence belongs to the TMEM14 family. As to expression, expressed at significantly higher levels in ovarian cancer tissues than in normal tissues (at protein level).

Its subcellular location is the mitochondrion membrane. The protein resides in the endoplasmic reticulum membrane. Functionally, inhibits apoptosis via negative regulation of the mitochondrial outer membrane permeabilization involved in apoptotic signaling pathway. This chain is Transmembrane protein 14A (TMEM14A), found in Homo sapiens (Human).